Here is a 141-residue protein sequence, read N- to C-terminus: MRQRTIVCPLIQNDGCYLLCKMADNRGVFPGQWALSGGGVEPGERIEEALRREVREELGEQLILSDITPWTFRDDIRVKTYADGRQEEIYMIYLIFDCVSANRDICINDEFQDYAWVKPEELALYDLNVATRHTLALKGLL.

Residues 1 to 141 (MRQRTIVCPL…RHTLALKGLL (141 aa)) form the Nudix hydrolase domain. Residues 38–59 (GGVEPGERIEEALRREVREELG) carry the Nudix box motif.

The protein belongs to the Nudix hydrolase family. NudI subfamily. Monomer. The cofactor is Mg(2+).

It catalyses the reaction a ribonucleoside 5'-triphosphate + H2O = a ribonucleoside 5'-phosphate + diphosphate + H(+). The catalysed reaction is a 2'-deoxyribonucleoside 5'-triphosphate + H2O = a 2'-deoxyribonucleoside 5'-phosphate + diphosphate + H(+). It carries out the reaction dUTP + H2O = dUMP + diphosphate + H(+). The enzyme catalyses dTTP + H2O = dTMP + diphosphate + H(+). It catalyses the reaction dCTP + H2O = dCMP + diphosphate + H(+). In terms of biological role, catalyzes the hydrolysis of nucleoside triphosphates, with a preference for pyrimidine deoxynucleoside triphosphates (dUTP, dTTP and dCTP). This chain is Nucleoside triphosphatase NudI, found in Salmonella schwarzengrund (strain CVM19633).